We begin with the raw amino-acid sequence, 287 residues long: Ribosomal RNA small subunit methyltransferase A (287 aa).

A compositionally biased stretch (polar residues) spans 1–15 (MSKTTFDAQSITNSL). The segment at 1-20 (MSKTTFDAQSITNSLRAAKH) is disordered. Asn29, Leu31, Gly56, Glu77, and Asn126 together coordinate S-adenosyl-L-methionine.

This sequence belongs to the class I-like SAM-binding methyltransferase superfamily. rRNA adenine N(6)-methyltransferase family. RsmA subfamily.

It is found in the cytoplasm. It catalyses the reaction adenosine(1518)/adenosine(1519) in 16S rRNA + 4 S-adenosyl-L-methionine = N(6)-dimethyladenosine(1518)/N(6)-dimethyladenosine(1519) in 16S rRNA + 4 S-adenosyl-L-homocysteine + 4 H(+). Its function is as follows. Specifically dimethylates two adjacent adenosines (A1518 and A1519) in the loop of a conserved hairpin near the 3'-end of 16S rRNA in the 30S particle. May play a critical role in biogenesis of 30S subunits. The sequence is that of Ribosomal RNA small subunit methyltransferase A from Psychrobacter cryohalolentis (strain ATCC BAA-1226 / DSM 17306 / VKM B-2378 / K5).